A 199-amino-acid polypeptide reads, in one-letter code: Recombination protein RecR (199 aa).

Residues 56 to 71 form a C4-type zinc finger; it reads CATCGNVAQEEQCNIC. One can recognise a Toprim domain in the interval 79-174; it reads SVICVVEEPK…KVTRLASGLP (96 aa).

The protein belongs to the RecR family.

Functionally, may play a role in DNA repair. It seems to be involved in an RecBC-independent recombinational process of DNA repair. It may act with RecF and RecO. In Streptomyces coelicolor (strain ATCC BAA-471 / A3(2) / M145), this protein is Recombination protein RecR.